The sequence spans 269 residues: Chromophore lyase CRL, chloroplastic (269 aa).

A helical transmembrane segment spans residues 19 to 36 (ARGLVVKTLVLIGGALLI).

The protein belongs to the CpcT/CpeT biliprotein lyase family. Mostly expressed in shoot apices, to a lower extent, in leaves, inflorescence stems, buds and cotyledons, and, at low levels, in roots and siliques.

It localises to the plastid. The protein localises to the chloroplast outer membrane. Its function is as follows. Covalently attaches a chromophore to Cys residue(s) of phycobiliproteins. Required for plastid division, and involved in cell differentiation and regulation of the cell division plane. Maintenance of plastid homeostasis controls plant preconditioning to stress and stress acclimation. Confers sensitivity to cabbage leaf curl virus (CaLCuV), probably by supporting viral movement. This Arabidopsis thaliana (Mouse-ear cress) protein is Chromophore lyase CRL, chloroplastic (CRL).